A 406-amino-acid chain; its full sequence is Calreticulin (406 aa).

A signal peptide spans 1–17; sequence MMWCKTVIVLLATVGFI. C105 and C137 are disulfide-bonded. 4 residues coordinate an alpha-D-glucoside: Y109, K111, Y128, and D135. Tandem repeats lie at residues 191 to 202, 210 to 221, 227 to 238, 244 to 255, 259 to 269, 273 to 283, and 287 to 297. Positions 191–255 are 4 X approximate repeats; that stretch reads VESGNLEDDW…DATKPEDWDD (65 aa). Positions 207–251 are enriched in basic and acidic residues; sequence KIKDPTATKPEDWDDRATIPDPDDKKPEDWDKPEHIPDPDATKPE. A disordered region spans residues 207 to 259; sequence KIKDPTATKPEDWDDRATIPDPDDKKPEDWDKPEHIPDPDATKPEDWDDEMDG. The segment at 259-297 is 3 X approximate repeats; sequence GEWEPPMIDNPEFKGEWQPKQLDNPNYKGAWEHPEIANP. D317 provides a ligand contact to an alpha-D-glucoside. The disordered stretch occupies residues 347-406; it reads KNTQAGEKKMKEAQDEVQRKKDEEEAKKASDKDDEDEDDDDEEKDDESKQDKDQSEHDEL. The span at 352 to 377 shows a compositional bias: basic and acidic residues; it reads GEKKMKEAQDEVQRKKDEEEAKKASD. A compositionally biased stretch (acidic residues) spans 378–391; sequence KDDEDEDDDDEEKD. The span at 392-406 shows a compositional bias: basic and acidic residues; it reads DESKQDKDQSEHDEL.

It belongs to the calreticulin family.

The protein resides in the endoplasmic reticulum lumen. Functionally, molecular calcium-binding chaperone promoting folding, oligomeric assembly and quality control in the ER via the calreticulin/calnexin cycle. This lectin may interact transiently with almost all of the monoglucosylated glycoproteins that are synthesized in the ER. In Drosophila melanogaster (Fruit fly), this protein is Calreticulin.